A 255-amino-acid polypeptide reads, in one-letter code: Imidazole glycerol phosphate synthase subunit HisF (255 aa).

Active-site residues include aspartate 11 and aspartate 130.

Belongs to the HisA/HisF family. In terms of assembly, heterodimer of HisH and HisF.

It is found in the cytoplasm. It carries out the reaction 5-[(5-phospho-1-deoxy-D-ribulos-1-ylimino)methylamino]-1-(5-phospho-beta-D-ribosyl)imidazole-4-carboxamide + L-glutamine = D-erythro-1-(imidazol-4-yl)glycerol 3-phosphate + 5-amino-1-(5-phospho-beta-D-ribosyl)imidazole-4-carboxamide + L-glutamate + H(+). Its pathway is amino-acid biosynthesis; L-histidine biosynthesis; L-histidine from 5-phospho-alpha-D-ribose 1-diphosphate: step 5/9. IGPS catalyzes the conversion of PRFAR and glutamine to IGP, AICAR and glutamate. The HisF subunit catalyzes the cyclization activity that produces IGP and AICAR from PRFAR using the ammonia provided by the HisH subunit. The sequence is that of Imidazole glycerol phosphate synthase subunit HisF from Campylobacter jejuni (strain RM1221).